Consider the following 211-residue polypeptide: Redox-sensing transcriptional repressor Rex (211 aa).

Residues 17 to 56 (LYYRFIQNFAQEGMERISSKELSEAMKIDSATIRRDFSYF) constitute a DNA-binding region (H-T-H motif). Residue 91-96 (GVGNLG) coordinates NAD(+).

It belongs to the transcriptional regulatory Rex family. As to quaternary structure, homodimer.

The protein resides in the cytoplasm. Its function is as follows. Modulates transcription in response to changes in cellular NADH/NAD(+) redox state. The protein is Redox-sensing transcriptional repressor Rex of Lysinibacillus sphaericus (strain C3-41).